A 360-amino-acid polypeptide reads, in one-letter code: Peptide chain release factor 1 (360 aa).

An N5-methylglutamine modification is found at Gln235. Positions 283–308 (MQKRQQAEASERRNLLGSGDRSDRNR) are enriched in basic and acidic residues. Residues 283–313 (MQKRQQAEASERRNLLGSGDRSDRNRTYNFP) are disordered.

This sequence belongs to the prokaryotic/mitochondrial release factor family. In terms of processing, methylated by PrmC. Methylation increases the termination efficiency of RF1.

It is found in the cytoplasm. In terms of biological role, peptide chain release factor 1 directs the termination of translation in response to the peptide chain termination codons UAG and UAA. The polypeptide is Peptide chain release factor 1 (Yersinia enterocolitica serotype O:8 / biotype 1B (strain NCTC 13174 / 8081)).